A 230-amino-acid polypeptide reads, in one-letter code: MTTNTVPLHPYWPRHLKLDNFVPNDLPTSHILVGLFSISGGLIVITWLLSSRASVVPLGAGRRLALCWFAVCTFIHLVIEGWFSLYNGILLEDQAFLSQLWKEYSKGDSRYILSDSFVVCMETVTACLWGPLSLWVVIAFLRQQPFRFVLQLVVSMGQIYGDVLYFLTELHEGLQHGEIGHPVYFWFYFVFLNAVWLVIPSILVLDAIKHLTSAQSVLDSKVMKIKSKHN.

At T2 the chain carries N-acetylthreonine. The next 4 helical transmembrane spans lie at 29–49 (SHILVGLFSISGGLIVITWLL), 66–86 (LCWFAVCTFIHLVIEGWFSLY), 121–141 (METVTACLWGPLSLWVVIAFL), and 185–205 (FWFYFVFLNAVWLVIPSILVL). The 144-residue stretch at 61-204 (GRRLALCWFA…VWLVIPSILV (144 aa)) folds into the EXPERA domain.

This sequence belongs to the EBP family.

Its subcellular location is the endoplasmic reticulum membrane. The protein resides in the nucleus envelope. The protein localises to the cytoplasmic vesicle. It catalyses the reaction lathosterol = 5alpha-cholest-8-en-3beta-ol. The catalysed reaction is zymosterol = 5alpha-cholesta-7,24-dien-3beta-ol. It carries out the reaction 5,6alpha-epoxy-5alpha-cholestan-3beta-ol + H2O = 5alpha-cholestane-3beta,5,6beta-triol. The enzyme catalyses 5,6beta-epoxy-5beta-cholestan-3beta-ol + H2O = 5alpha-cholestane-3beta,5,6beta-triol. It functions in the pathway steroid biosynthesis; cholesterol biosynthesis. Isomerase that catalyzes the conversion of Delta(8)-sterols to their corresponding Delta(7)-isomers. In terms of biological role, component of the microsomal antiestrogen binding site (AEBS), a multiproteic complex at the ER membrane that consists of an association between EBP and 7-dehydrocholesterol reductase/DHCR7. This complex is responsible for cholesterol-5,6-epoxide hydrolase (ChEH) activity, which consists in the hydration of cholesterol-5,6-epoxides (5,6-EC) into cholestane-3beta,5alpha,6beta-triol (CT). The precise role of each component of this complex has not been described yet. The protein is 3-beta-hydroxysteroid-Delta(8),Delta(7)-isomerase of Mus musculus (Mouse).